The chain runs to 61 residues: Small ribosomal subunit protein uS14 (61 aa).

The Zn(2+) site is built by C24, C27, C40, and C43.

The protein belongs to the universal ribosomal protein uS14 family. Zinc-binding uS14 subfamily. Part of the 30S ribosomal subunit. Contacts proteins S3 and S10. Zn(2+) serves as cofactor.

In terms of biological role, binds 16S rRNA, required for the assembly of 30S particles and may also be responsible for determining the conformation of the 16S rRNA at the A site. The polypeptide is Small ribosomal subunit protein uS14 (Spiroplasma citri).